Consider the following 447-residue polypeptide: Tetratricopeptide repeat protein 23 (447 aa).

TPR repeat units lie at residues 45 to 78 (LHLC…TRIC), 137 to 170 (IELF…SKEL), 186 to 219 (ARIR…VEIS), and 356 to 389 (AETY…QTLL).

Found Associated with the EvC complex composed of EFCAB7, IQCE, EVC2 and EVC.

It localises to the cell projection. It is found in the cilium. In terms of biological role, participates positively in the ciliary Hedgehog (Hh) signaling. The sequence is that of Tetratricopeptide repeat protein 23 (TTC23) from Homo sapiens (Human).